A 292-amino-acid polypeptide reads, in one-letter code: Protoheme IX farnesyltransferase (292 aa).

The next 9 helical transmembrane spans lie at 12–32, 43–63, 94–114, 115–135, 144–164, 169–189, 216–236, 239–259, and 267–287; these read ITWLILMSTGIGYFFGLPQAS, LLRLLHTIIGTGLIASGTAAL, LAFGVALSIAGFVELWLGVNL, LSAGIGAFTLASYLFLYTPMK, VGAIPGAMPPVIGFAAAAGGL, WVLFAILFLWQFPHFYSIAWM, IVIYGIALIPVSLVPALLGMS, LYLVGALLLGLWFLYSGVRVA, and ARGVLITSVLYLPLIYGLMLL.

Belongs to the UbiA prenyltransferase family. Protoheme IX farnesyltransferase subfamily.

It is found in the cell inner membrane. It carries out the reaction heme b + (2E,6E)-farnesyl diphosphate + H2O = Fe(II)-heme o + diphosphate. The protein operates within porphyrin-containing compound metabolism; heme O biosynthesis; heme O from protoheme: step 1/1. Its function is as follows. Converts heme B (protoheme IX) to heme O by substitution of the vinyl group on carbon 2 of heme B porphyrin ring with a hydroxyethyl farnesyl side group. The sequence is that of Protoheme IX farnesyltransferase from Solibacter usitatus (strain Ellin6076).